We begin with the raw amino-acid sequence, 73 residues long: Translation initiation factor IF-1 (73 aa).

Residues 1-73 enclose the S1-like domain; it reads MAKKDGVIEI…TRGRIVYRYK (73 aa).

This sequence belongs to the IF-1 family. Component of the 30S ribosomal translation pre-initiation complex which assembles on the 30S ribosome in the order IF-2 and IF-3, IF-1 and N-formylmethionyl-tRNA(fMet); mRNA recruitment can occur at any time during PIC assembly.

Its subcellular location is the cytoplasm. In terms of biological role, one of the essential components for the initiation of protein synthesis. Stabilizes the binding of IF-2 and IF-3 on the 30S subunit to which N-formylmethionyl-tRNA(fMet) subsequently binds. Helps modulate mRNA selection, yielding the 30S pre-initiation complex (PIC). Upon addition of the 50S ribosomal subunit IF-1, IF-2 and IF-3 are released leaving the mature 70S translation initiation complex. This chain is Translation initiation factor IF-1, found in Leifsonia xyli subsp. xyli (strain CTCB07).